A 530-amino-acid polypeptide reads, in one-letter code: MNLLETRRSLLEEMEIIENAIAERIQRNPELYYHYIQESSKVFPDTKLPRSSLIAENKIYKFKKVKRKRKQIILQQHEINIFLRDYQEKQQTFNKINRPEETQEDDKDLPNFERKLQQLEKELKNEDENFELDINSKKDKYALFSSSSDPSRRTNILSDRARDLDLNEIFTRDEQYGEYMELEQFHSLWLNVIKRGDCSLLQFLDILELFLDDEKYLLTPPMDRKNDRYMAFLLKLSKYVETFFFKSYALLDAAAVENLIKSDFEHSYCRGSLRSEAKGIYCPFCSRWFKTSSVFESHLVGKIHKKNESKRRNFVYSEYKLHRYLKYLNDEFSRTRSFVERKLAFTANERMAEMDILTQKYEAPAYDSTEKEGAEQVDGEQRDGQLQEEHLSGKSFDMPLGPDGLPMPYWLYKLHGLDREYRCEICSNKVYNGRRTFERHFNEERHIYHLRCLGIEPSSVFKGITKIKEAQELWKNMQGQSQLTSIAAVPPKPNPSQLKVPTELELEEEDEEGNVMSKKVYDELKKQGLV.

A Matrin-type 1 zinc finger spans residues 280-310 (IYCPFCSRWFKTSSVFESHLVGKIHKKNESK). The segment at 367 to 388 (DSTEKEGAEQVDGEQRDGQLQE) is disordered. Residues 368-388 (STEKEGAEQVDGEQRDGQLQE) show a composition bias toward basic and acidic residues. A Matrin-type 2 zinc finger spans residues 421-452 (YRCEICSNKVYNGRRTFERHFNEERHIYHLRC). A disordered region spans residues 488 to 516 (AVPPKPNPSQLKVPTELELEEEDEEGNVM). The span at 504–513 (LELEEEDEEG) shows a compositional bias: acidic residues.

Belongs to the SF3A3 family. As to quaternary structure, belongs to the CWC complex (or CEF1-associated complex), a spliceosome sub-complex reminiscent of a late-stage spliceosome composed of the U2, U5 and U6 snRNAs and at least BUD13, BUD31, BRR2, CDC40, CEF1, CLF1, CUS1, CWC2, CWC15, CWC21, CWC22, CWC23, CWC24, CWC25, CWC27, ECM2, HSH155, IST3, ISY1, LEA1, MSL1, NTC20, PRP8, PRP9, PRP11, PRP19, PRP21, PRP22, PRP45, PRP46, SLU7, SMB1, SMD1, SMD2, SMD3, SMX2, SMX3, SNT309, SNU114, SPP2, SYF1, SYF2, RSE1 and YJU2.

It is found in the nucleus. Its function is as follows. mRNA splicing factors, PRP9, PRP11, and PRP21, are necessary for binding of the U2 snRNP to the pre-mRNA in an early step of spliceosome assembly. The protein is Pre-mRNA-splicing factor PRP9 (PRP9) of Saccharomyces cerevisiae (strain ATCC 204508 / S288c) (Baker's yeast).